Reading from the N-terminus, the 58-residue chain is uncharacterized protein (58 aa).

This is an uncharacterized protein from Dictyostelium discoideum (Social amoeba).